The chain runs to 205 residues: Putative STAG3-like protein 1 (205 aa).

An SCD domain is found at 10-95 (PKVTCRDVLP…GRFKDWMVSM (86 aa)).

Belongs to the SCC3 family.

Its subcellular location is the nucleus. This is Putative STAG3-like protein 1 (STAG3L1) from Homo sapiens (Human).